The primary structure comprises 322 residues: Mitochondrial uncoupling protein 4 (322 aa).

Solcar repeat units lie at residues 20–114 (SKFL…LREV), 124–216 (YPLW…VKHY), and 225–316 (DNIS…IREM). The next 6 helical transmembrane spans lie at 22–39 (FLLS…TFPL), 87–108 (WQGV…MVTY), 126–143 (LWKS…GQFL), 194–211 (PNIQ…TTYD), 228–247 (STHG…LGTP), and 287–310 (SLYK…WLTY).

The protein belongs to the mitochondrial carrier (TC 2.A.29) family. As to quaternary structure, homotetramer.

It localises to the mitochondrion inner membrane. The protein localises to the cell projection. It is found in the neuron projection. The enzyme catalyses H(+)(in) = H(+)(out). It carries out the reaction chloride(in) = chloride(out). Its function is as follows. Facilitates proton transport across the inner mitochondrial membrane and may dissipate excessive proton gradient associated with oxidative and metabolic stress at neuronal synapses. Regulates glutamate-induced proton conductance in astrocytes, shifting the energy metabolism toward aerobic glycolysis and lactate transfer to neurons for ATP synthesis. Can transport chloride ions with lower efficiency. The transport mechanism remains to be elucidated. This is Mitochondrial uncoupling protein 4 from Mus musculus (Mouse).